The primary structure comprises 1074 residues: Semaphorin-5A (1074 aa).

The N-terminal stretch at 1-22 is a signal peptide; sequence MKGTCVIAWLFSSLGLWRLAHP. Residues 23–968 are Extracellular-facing; it reads EAQGTTQCQR…EEKRCGEFNM (946 aa). The 450-residue stretch at 35-484 folds into the Sema domain; it reads HPVISYKEIG…LREHVVKIPL (450 aa). Cystine bridges form between cysteine 104–cysteine 114 and cysteine 131–cysteine 140. N-linked (GlcNAc...) asparagine glycans are attached at residues asparagine 142, asparagine 168, asparagine 227, and asparagine 277. Disulfide bonds link cysteine 254–cysteine 357 and cysteine 278–cysteine 320. N-linked (GlcNAc...) asparagine glycosylation is found at asparagine 323, asparagine 367, and asparagine 437. 2 cysteine pairs are disulfide-bonded: cysteine 487-cysteine 504 and cysteine 496-cysteine 513. N-linked (GlcNAc...) asparagine glycosylation is found at asparagine 536 and asparagine 591. TSP type-1 domains lie at 540 to 593, 595 to 651, 653 to 702, 707 to 765, 784 to 839, 841 to 896, and 897 to 944; these read DGHF…ANCS, NGGW…LLCP, HMFW…NPCP, TTPW…GCST, NGAW…LPCP, DGVW…QPCP, and ESWS…VFDS. Disulfide bonds link cysteine 607-cysteine 644, cysteine 611-cysteine 650, cysteine 622-cysteine 634, cysteine 665-cysteine 696, cysteine 669-cysteine 701, and cysteine 680-cysteine 686. N-linked (GlcNAc...) asparagine glycosylation occurs at asparagine 717. Disulfide bonds link cysteine 796/cysteine 833, cysteine 800/cysteine 838, cysteine 811/cysteine 823, cysteine 853/cysteine 890, cysteine 857/cysteine 895, and cysteine 868/cysteine 880. N-linked (GlcNAc...) asparagine glycosylation occurs at asparagine 933. The helical transmembrane segment at 969–989 threads the bilayer; that stretch reads FHMIAVGLSSSILGCLLTLLV. Residues 990 to 1074 are Cytoplasmic-facing; the sequence is YTYCQRYQQQ…FTDLNNYDEY (85 aa).

The protein belongs to the semaphorin family. As to quaternary structure, binds PLXNB3.

Its subcellular location is the membrane. Its function is as follows. Bifunctional axonal guidance cue regulated by sulfated proteoglycans; attractive effects result from interactions with heparan sulfate proteoglycans (HSPGs), while the inhibitory effects depend on interactions with chondroitin sulfate proteoglycans (CSPGs). Ligand for receptor PLXNB3. In glioma cells, SEMA5A stimulation of PLXNB3 results in the disassembly of F-actin stress fibers, disruption of focal adhesions and cellular collapse as well as inhibition of cell migration and invasion through ARHGDIA-mediated inactivation of RAC1. May promote angiogenesis by increasing endothelial cell proliferation and migration and inhibiting apoptosis. The sequence is that of Semaphorin-5A (SEMA5A) from Homo sapiens (Human).